Consider the following 392-residue polypeptide: 1-deoxy-D-xylulose 5-phosphate reductoisomerase (392 aa).

Residues threonine 10, glycine 11, serine 12, isoleucine 13, arginine 37, glutamine 38, and asparagine 124 each coordinate NADPH. A 1-deoxy-D-xylulose 5-phosphate-binding site is contributed by lysine 125. Residue glutamate 126 coordinates NADPH. Mn(2+) is bound at residue aspartate 150. 4 residues coordinate 1-deoxy-D-xylulose 5-phosphate: serine 151, glutamate 152, serine 179, and histidine 202. A Mn(2+)-binding site is contributed by glutamate 152. An NADPH-binding site is contributed by glycine 208. Residues serine 215, asparagine 220, lysine 221, and glutamate 224 each coordinate 1-deoxy-D-xylulose 5-phosphate. Position 224 (glutamate 224) interacts with Mn(2+).

The protein belongs to the DXR family. The cofactor is Mg(2+). Mn(2+) serves as cofactor.

It carries out the reaction 2-C-methyl-D-erythritol 4-phosphate + NADP(+) = 1-deoxy-D-xylulose 5-phosphate + NADPH + H(+). It functions in the pathway isoprenoid biosynthesis; isopentenyl diphosphate biosynthesis via DXP pathway; isopentenyl diphosphate from 1-deoxy-D-xylulose 5-phosphate: step 1/6. Catalyzes the NADPH-dependent rearrangement and reduction of 1-deoxy-D-xylulose-5-phosphate (DXP) to 2-C-methyl-D-erythritol 4-phosphate (MEP). The sequence is that of 1-deoxy-D-xylulose 5-phosphate reductoisomerase from Cupriavidus metallidurans (strain ATCC 43123 / DSM 2839 / NBRC 102507 / CH34) (Ralstonia metallidurans).